The chain runs to 267 residues: Protein isy-1 (267 aa).

Residues Leu175–Asp204 adopt a coiled-coil conformation. The interval Gln195 to Leu221 is disordered.

It belongs to the ISY1 family. In terms of tissue distribution, ubiquitously expressed.

It is found in the nucleus. In terms of biological role, regulates the processing of the mir-60 microRNA (miRNA), which in turn negatively regulates the expression of the transcription factor zip-10. Does not affect the splicing of zip-10. This Caenorhabditis elegans protein is Protein isy-1.